The chain runs to 677 residues: Bargin (677 aa).

Composition is skewed to low complexity over residues 1–13 and 29–39; these read MDRGLPGPATPAV and APHAAAGPDGQ. Disordered regions lie at residues 1–39 and 168–190; these read MDRGLPGPATPAVTPQPPARPQDDEEAAAPHAAAGPDGQ and SQATKNSGSSQGLGGSPGSHSHT. Residues 25-270 enclose the BAR domain; that stretch reads EEAAAPHAAA…RENHGQADHS (246 aa). A phosphoserine mark is found at S183, S270, and S272. The 194-residue stretch at 284–477 folds into the Rho-GAP domain; that stretch reads VSLATHLQEL…ALIQSADTLF (194 aa). Residues 504–577 form a disordered region; the sequence is SEELPSTAVP…DMARRSTGSL (74 aa). Positions 516–530 are enriched in pro residues; it reads ATTPAPAPAPAPAPA. Phosphoserine is present on residues S552 and S558. The interval 574–677 is mediates non-covalent binding of poly-ubiquitin chains; sequence TGSLAAAVET…IADLTEGLED (104 aa).

Expressed in brain (at protein level).

It localises to the cell membrane. The protein resides in the cytoplasm. The protein localises to the cytosol. Its function is as follows. GTPase activating protein (GAP) which specifically converts GTP-bound RAC1 and CDC42 in their inactive GDP-bound form. The GAP activity is enhanced by the non-covalent binding of K-29 and K-48 polyubiquitin chains. In Homo sapiens (Human), this protein is Bargin.